A 205-amino-acid polypeptide reads, in one-letter code: N-(5'-phosphoribosyl)anthranilate isomerase (205 aa).

This sequence belongs to the TrpF family.

The catalysed reaction is N-(5-phospho-beta-D-ribosyl)anthranilate = 1-(2-carboxyphenylamino)-1-deoxy-D-ribulose 5-phosphate. It participates in amino-acid biosynthesis; L-tryptophan biosynthesis; L-tryptophan from chorismate: step 3/5. The polypeptide is N-(5'-phosphoribosyl)anthranilate isomerase (Acidithiobacillus ferrooxidans (strain ATCC 23270 / DSM 14882 / CIP 104768 / NCIMB 8455) (Ferrobacillus ferrooxidans (strain ATCC 23270))).